A 1111-amino-acid polypeptide reads, in one-letter code: Putative leucine--tRNA ligase, cytoplasmic (1111 aa).

Positions 74 to 84 match the 'HIGH' region motif; sequence PYMNGALHLGH. S460 is subject to Phosphoserine. The 'KMSKS' region motif lies at 737–741; sequence KMSKS. K740 contacts ATP.

Belongs to the class-I aminoacyl-tRNA synthetase family.

Its subcellular location is the cytoplasm. It carries out the reaction tRNA(Leu) + L-leucine + ATP = L-leucyl-tRNA(Leu) + AMP + diphosphate. This is Putative leucine--tRNA ligase, cytoplasmic (lrs1) from Schizosaccharomyces pombe (strain 972 / ATCC 24843) (Fission yeast).